Consider the following 345-residue polypeptide: Anthranilate phosphoribosyltransferase (345 aa).

Residues G81, 84 to 85 (GD), S89, 91 to 94 (NVST), 109 to 117 (KHGNRAATS), and A121 each bind 5-phospho-alpha-D-ribose 1-diphosphate. G81 is an anthranilate binding site. Position 93 (S93) interacts with Mg(2+). N112 is a binding site for anthranilate. An anthranilate-binding site is contributed by R167. Positions 226 and 227 each coordinate Mg(2+).

The protein belongs to the anthranilate phosphoribosyltransferase family. As to quaternary structure, homodimer. Requires Mg(2+) as cofactor.

It catalyses the reaction N-(5-phospho-beta-D-ribosyl)anthranilate + diphosphate = 5-phospho-alpha-D-ribose 1-diphosphate + anthranilate. It functions in the pathway amino-acid biosynthesis; L-tryptophan biosynthesis; L-tryptophan from chorismate: step 2/5. Functionally, catalyzes the transfer of the phosphoribosyl group of 5-phosphorylribose-1-pyrophosphate (PRPP) to anthranilate to yield N-(5'-phosphoribosyl)-anthranilate (PRA). The sequence is that of Anthranilate phosphoribosyltransferase from Methylobacterium radiotolerans (strain ATCC 27329 / DSM 1819 / JCM 2831 / NBRC 15690 / NCIMB 10815 / 0-1).